Here is a 118-residue protein sequence, read N- to C-terminus: Large ribosomal subunit protein bL20 (118 aa).

The protein belongs to the bacterial ribosomal protein bL20 family. In terms of assembly, part of the 50S ribosomal subunit. Contacts proteins L13 and L21.

Functionally, binds directly to 23S rRNA, probably serving to organize its structure. This chain is Large ribosomal subunit protein bL20 (rplT), found in Deinococcus radiodurans (strain ATCC 13939 / DSM 20539 / JCM 16871 / CCUG 27074 / LMG 4051 / NBRC 15346 / NCIMB 9279 / VKM B-1422 / R1).